The sequence spans 384 residues: MAKHLFTSESVSEGHPDKIADQISDAVLDAILEQDPKARVACETYVKTGMVLVGGEITTSAWVDIEEITRNTVREIGYVHSDMGFDANSCAVLSAIGKQSPDINQGVDRADPLEQGAGDQGLMFGYATNETDVLMPAPITYAHRLVQRQAEVRKNGTLPWLRPDAKSQVTFQYDDGKIVGIDAVVLSTQHSEEIDQKSLQEAVMEEIIKPILPAEWLTSATTFFINPTGRFVIGGPMGDCGLTGRKIIVDTYGGMARHGGGAFSGKDPSKVDRSAAYAARYVAKNIVAAGLADRCEIQVSYAIGVAEPTSIMVETFGTEKVPSEQLTLLVREFFDLRPYGLIQMLDLLHPIYKETAAYGHFGREHFPWEKTDKAQLLRDAAGLK.

His15 is a binding site for ATP. Mg(2+) is bound at residue Asp17. Residue Glu43 coordinates K(+). Residues Glu56 and Gln99 each coordinate L-methionine. The segment at Gln99–Arg109 is flexible loop. Residues Asp164 to Lys166, Arg230 to Phe231, Asp239, Arg245 to Lys246, Ala262, and Lys266 contribute to the ATP site. Asp239 is an L-methionine binding site. Lys270 provides a ligand contact to L-methionine.

The protein belongs to the AdoMet synthase family. Homotetramer; dimer of dimers. Requires Mg(2+) as cofactor. It depends on K(+) as a cofactor.

The protein resides in the cytoplasm. It carries out the reaction L-methionine + ATP + H2O = S-adenosyl-L-methionine + phosphate + diphosphate. It functions in the pathway amino-acid biosynthesis; S-adenosyl-L-methionine biosynthesis; S-adenosyl-L-methionine from L-methionine: step 1/1. Catalyzes the formation of S-adenosylmethionine (AdoMet) from methionine and ATP. The overall synthetic reaction is composed of two sequential steps, AdoMet formation and the subsequent tripolyphosphate hydrolysis which occurs prior to release of AdoMet from the enzyme. The polypeptide is S-adenosylmethionine synthase (Shigella boydii serotype 18 (strain CDC 3083-94 / BS512)).